The chain runs to 305 residues: Cytoplasmic envelopment protein 1 (305 aa).

This sequence belongs to the herpesviridae cytoplasmic envelopment protein 1 family.

Its subcellular location is the virion. It is found in the virion tegument. The protein resides in the host cytoplasm. It localises to the host Golgi apparatus. Its function is as follows. Plays a critical role in cytoplasmic virus egress. Participates in the final step of tegumentation and envelope acquisition within the host cytoplasm. This is Cytoplasmic envelopment protein 1 (MDV019) from Gallus gallus (Chicken).